Reading from the N-terminus, the 318-residue chain is DNA-directed RNA polymerase subunit alpha 2 (318 aa).

Residues 1–227 form an alpha N-terminal domain (alpha-NTD) region; sequence MALENLLHPT…NQLRNILDIE (227 aa). The alpha C-terminal domain (alpha-CTD) stretch occupies residues 242–318; that stretch reads INPILLKHVE…TLIENWPQDL (77 aa).

It belongs to the RNA polymerase alpha chain family. Homodimer. The RNAP catalytic core consists of 2 alpha, 1 beta, 1 beta' and 1 omega subunit. When a sigma factor is associated with the core the holoenzyme is formed, which can initiate transcription.

It catalyses the reaction RNA(n) + a ribonucleoside 5'-triphosphate = RNA(n+1) + diphosphate. Functionally, DNA-dependent RNA polymerase catalyzes the transcription of DNA into RNA using the four ribonucleoside triphosphates as substrates. The protein is DNA-directed RNA polymerase subunit alpha 2 of Francisella tularensis subsp. tularensis (strain FSC 198).